A 176-amino-acid chain; its full sequence is Ribosome maturation factor RimM (176 aa).

Residues 101–173 (EGEYYHYRLI…RMVVDLPEGL (73 aa)) form the PRC barrel domain.

This sequence belongs to the RimM family. Binds ribosomal protein uS19.

Its subcellular location is the cytoplasm. An accessory protein needed during the final step in the assembly of 30S ribosomal subunit, possibly for assembly of the head region. Essential for efficient processing of 16S rRNA. May be needed both before and after RbfA during the maturation of 16S rRNA. It has affinity for free ribosomal 30S subunits but not for 70S ribosomes. This is Ribosome maturation factor RimM from Syntrophobacter fumaroxidans (strain DSM 10017 / MPOB).